The sequence spans 887 residues: Translation initiation factor IF-2 (887 aa).

Disordered stretches follow at residues 31-87 (KLAQ…PRRI), 94-113 (SFVS…DSDA), and 129-285 (VETE…KWRK). A compositionally biased stretch (basic and acidic residues) spans 42-59 (SSSEKPSTKVPEKIAKEK). 2 stretches are compositionally biased toward basic and acidic residues: residues 150–171 (VVAK…KEPP) and 199–212 (PKKE…EKTK). Over residues 213-223 (TTQTKPQQSSD) the composition is skewed to low complexity. Over residues 241–273 (YRRDVSKKSGSDFRDRAKKDDNPKAFTGRDRYG) the composition is skewed to basic and acidic residues. Residues 393–562 (TRPPIVAFMG…ALQAEVLELK (170 aa)) enclose the tr-type G domain. Residues 402–409 (GHVDHGKT) form a G1 region. 402–409 (GHVDHGKT) contributes to the GTP binding site. Residues 427–431 (AITQH) form a G2 region. The segment at 448 to 451 (DTPG) is G3. Residues 448 to 452 (DTPGH) and 502 to 505 (NKCD) contribute to the GTP site. The tract at residues 502-505 (NKCD) is G4. Residues 538 to 540 (SAK) are G5.

Belongs to the TRAFAC class translation factor GTPase superfamily. Classic translation factor GTPase family. IF-2 subfamily.

It is found in the cytoplasm. In terms of biological role, one of the essential components for the initiation of protein synthesis. Protects formylmethionyl-tRNA from spontaneous hydrolysis and promotes its binding to the 30S ribosomal subunits. Also involved in the hydrolysis of GTP during the formation of the 70S ribosomal complex. The protein is Translation initiation factor IF-2 of Chlamydia caviae (strain ATCC VR-813 / DSM 19441 / 03DC25 / GPIC) (Chlamydophila caviae).